Here is a 301-residue protein sequence, read N- to C-terminus: GTPase Era (301 aa).

The Era-type G domain occupies Lys7–Glu173. The interval Gly15–Ser22 is G1. Gly15–Ser22 contributes to the GTP binding site. Residues Gln41–Asn45 form a G2 region. A G3 region spans residues Asp62–Gly65. Residues Asp62–Ile66 and Asn123–Asp126 each bind GTP. Residues Asn123–Asp126 form a G4 region. Residues Ile152–Ala154 are G5. Positions Thr204 to His281 constitute a KH type-2 domain.

The protein belongs to the TRAFAC class TrmE-Era-EngA-EngB-Septin-like GTPase superfamily. Era GTPase family. Monomer.

Its subcellular location is the cytoplasm. The protein resides in the cell membrane. In terms of biological role, an essential GTPase that binds both GDP and GTP, with rapid nucleotide exchange. Plays a role in 16S rRNA processing and 30S ribosomal subunit biogenesis and possibly also in cell cycle regulation and energy metabolism. The sequence is that of GTPase Era from Lactobacillus helveticus (strain DPC 4571).